Reading from the N-terminus, the 1905-residue chain is Tudor domain-containing 6-like (1905 aa).

3 consecutive Tudor domains span residues 1–30 (MVEVYFIDHGNTEMVDWYNVKKLPAELREM), 215–279 (YERG…LFDL), and 435–491 (SVTP…AYEL). Residues 564–795 (SRAEGSFGNS…SKLTPPLSKL (232 aa)) are disordered. Residues 573–591 (SEKRNQLNDLDRGGRKETT) show a composition bias toward basic and acidic residues. Residues 592–602 (SKFQPYSQGSK) are compositionally biased toward polar residues. A compositionally biased stretch (basic and acidic residues) spans 622–631 (FQTKEREQFE). Polar residues-rich tracts occupy residues 651–660 (VQKNMSQSGF) and 687–704 (LYSQGRETPSMSQNSSYS). Basic and acidic residues predominate over residues 715 to 726 (RSKERQVSEHKQ). 2 stretches are compositionally biased toward polar residues: residues 746-766 (KASQNGSSSQTEAFWSSGSDQ) and 774-787 (NASQQRRSTFQESK). Tudor domains are found at residues 853–910 (YVNL…LLSI) and 1060–1118 (EIEV…IAAI). Disordered stretches follow at residues 1213–1245 (IEDNVIPSQADEDDHSEPSEEPCASESIETPAV), 1449–1599 (EDFE…TETE), 1655–1682 (VEDLDTENQESQICISGSDNRSKESGPV), and 1827–1905 (ESPA…APSV). 2 stretches are compositionally biased toward acidic residues: residues 1491–1500 (EAEGLEDQDQ) and 1522–1535 (EQAEDLVPEEDPGT). The segment covering 1553–1588 (SQEHKDFPEQEEDRVAEHKNDISEPDLQSKEQKEDL) has biased composition (basic and acidic residues). Over residues 1663-1673 (QESQICISGSD) the composition is skewed to polar residues. The segment covering 1876 to 1887 (FEPETDDMEQME) has biased composition (acidic residues).

In terms of assembly, interacts with FRGY2 (a component of messenger ribonucleoprotein (mRNP) particle) during germ cell development. As to expression, expressed in testis.

Its subcellular location is the cytoplasm. Its function is as follows. Tudor domain-containing protein involved in germ cell development, more specifically the formation of chromatoid body (during spermiogenesis), Balbiani body (during oogenesis), germ plasm (upon fertilization), and for proper miRNA expression and spliceosome maturation. Component of cytoplasmic mRNP particle through interaction with FRGY2, and binds to maternal mRNA related to cell cycle (RCC1, RHAMM, INCENP-A, MAD2L1, HELLS) and a germ plasm specific mRNA (Dead end/Dnd1), it is proposed a role in translational activation of the maternal mRNAs repressed in mRNP particle. The polypeptide is Tudor domain-containing 6-like (Xenopus laevis (African clawed frog)).